The chain runs to 85 residues: Probable dolichol-phosphate mannosyltransferase subunit 3 (85 aa).

Helical transmembrane passes span 13-33 (VLLV…LSYI) and 37-57 (AHCL…VATF).

It belongs to the DPM3 family.

Its subcellular location is the endoplasmic reticulum membrane. The protein operates within protein modification; protein glycosylation. Stabilizer subunit of the dolichol-phosphate-mannose synthase complex. The polypeptide is Probable dolichol-phosphate mannosyltransferase subunit 3 (Caenorhabditis briggsae).